The chain runs to 310 residues: MNDTPNDIQKPKQGKRFSERLPHWLRQALPKGSVFDFTDKTIKRTGMATVCEEALCPNRTRCWSRKTATYLALGDACSRRCGFCNIDFTKKPLPPDPDEPRKIAESAKILQLKHIVLTMVARDDLEDGGASCLVRIIDTLHKELPESTVEMLASDFQGNVDALHTLLDSGLTIYNHNVETVERLTPVVRHKATYRRSLFMLEQAALYLPDLKIKSGIMVGLGEQESEVKQTLKDLADHGVRIVTIGQYLRPSRLHIPVKSYVTPETFDYYRRVGESLGLFVYAGPFVRSSFNADIVLQDMENKQSKMAKT.

7 residues coordinate [4Fe-4S] cluster: Cys-51, Cys-56, Cys-62, Cys-77, Cys-81, Cys-84, and Ser-290. The Radical SAM core domain maps to 63–280 (WSRKTATYLA…RRVGESLGLF (218 aa)).

This sequence belongs to the radical SAM superfamily. Lipoyl synthase family. Requires [4Fe-4S] cluster as cofactor.

The protein resides in the cytoplasm. It carries out the reaction [[Fe-S] cluster scaffold protein carrying a second [4Fe-4S](2+) cluster] + N(6)-octanoyl-L-lysyl-[protein] + 2 oxidized [2Fe-2S]-[ferredoxin] + 2 S-adenosyl-L-methionine + 4 H(+) = [[Fe-S] cluster scaffold protein] + N(6)-[(R)-dihydrolipoyl]-L-lysyl-[protein] + 4 Fe(3+) + 2 hydrogen sulfide + 2 5'-deoxyadenosine + 2 L-methionine + 2 reduced [2Fe-2S]-[ferredoxin]. The protein operates within protein modification; protein lipoylation via endogenous pathway; protein N(6)-(lipoyl)lysine from octanoyl-[acyl-carrier-protein]: step 2/2. Its function is as follows. Catalyzes the radical-mediated insertion of two sulfur atoms into the C-6 and C-8 positions of the octanoyl moiety bound to the lipoyl domains of lipoate-dependent enzymes, thereby converting the octanoylated domains into lipoylated derivatives. The polypeptide is Lipoyl synthase (Chlamydia abortus (strain DSM 27085 / S26/3) (Chlamydophila abortus)).